We begin with the raw amino-acid sequence, 588 residues long: L-fucose isomerase (588 aa).

Active-site proton acceptor residues include glutamate 335 and aspartate 359. Residues glutamate 335, aspartate 359, and histidine 525 each contribute to the Mn(2+) site.

Belongs to the L-fucose isomerase family. Mn(2+) serves as cofactor.

Its subcellular location is the cytoplasm. It carries out the reaction L-fucose = L-fuculose. It functions in the pathway carbohydrate degradation; L-fucose degradation; L-lactaldehyde and glycerone phosphate from L-fucose: step 1/3. Its function is as follows. Converts the aldose L-fucose into the corresponding ketose L-fuculose. The polypeptide is L-fucose isomerase (Streptococcus pneumoniae (strain Hungary19A-6)).